Here is a 684-residue protein sequence, read N- to C-terminus: Transcriptional regulatory protein RCO1 (684 aa).

M1 carries the N-acetylmethionine modification. A disordered region spans residues 1–48; that stretch reads MDTSKKDTTRSPSHSNSSSPSSSSLSSSSSKEKKRPKRLSSQNVNYDL. Low complexity predominate over residues 10 to 29; sequence RSPSHSNSSSPSSSSLSSSS. A Phosphoserine modification is found at S68. Residues 260–309 form a PHD-type 1 zinc finger; the sequence is EDFCSACNQSGSFLCCDTCPKSFHFLCLDPPIDPNNLPKGDWHCNECKFK. A PHD-type 2; atypical zinc finger spans residues 414–472; the sequence is FLICYKCNQTRLGSWSHPENSRLIMTCDYCQTPWHLDCVPRASFKNLGSKWKCPLHSPT. S683 is subject to Phosphoserine.

Component of the RPD3C(S) complex composed of at least EAF3, RCO1, RPD3, SIN3, and UME1.

Its subcellular location is the nucleus. In terms of biological role, catalytic component of the RPD3C(S) histone deacetylase complex responsible for the deacetylation of lysine residues on the N-terminal part of the core histones (H2A, H2B, H3 and H4). Histone deacetylation gives a tag for epigenetic repression and plays an important role in transcriptional regulation, cell cycle progression, DNA damage response, osmotic stress response and developmental events. This chain is Transcriptional regulatory protein RCO1 (RCO1), found in Saccharomyces cerevisiae (strain ATCC 204508 / S288c) (Baker's yeast).